The sequence spans 229 residues: MIQAIVTDIEGTTTDIRFVHQVLFPYARERLTPFLRAHQQDDDITALLVDLRREIAQPDADIETLITVLHGFMDEDRKSTVLKAIQGIIWRTGYLQADFRGHVYPEVAQQLADWHQQGLKLYVYSSGSVAAQKLLFGYSDAGDLCPLFSGYFDTHVGAKRDVSAYQKIANQLGIAPQALLFLSDIRQELDAAQLAGWHTCQLIRDLPDNDSAHPQVNRFDQIVLSLFTE.

The protein belongs to the HAD-like hydrolase superfamily. MasA/MtnC family. Monomer. Requires Mg(2+) as cofactor.

The enzyme catalyses 5-methylsulfanyl-2,3-dioxopentyl phosphate + H2O = 1,2-dihydroxy-5-(methylsulfanyl)pent-1-en-3-one + phosphate. Its pathway is amino-acid biosynthesis; L-methionine biosynthesis via salvage pathway; L-methionine from S-methyl-5-thio-alpha-D-ribose 1-phosphate: step 3/6. It functions in the pathway amino-acid biosynthesis; L-methionine biosynthesis via salvage pathway; L-methionine from S-methyl-5-thio-alpha-D-ribose 1-phosphate: step 4/6. In terms of biological role, bifunctional enzyme that catalyzes the enolization of 2,3-diketo-5-methylthiopentyl-1-phosphate (DK-MTP-1-P) into the intermediate 2-hydroxy-3-keto-5-methylthiopentenyl-1-phosphate (HK-MTPenyl-1-P), which is then dephosphorylated to form the acireductone 1,2-dihydroxy-3-keto-5-methylthiopentene (DHK-MTPene). This is Enolase-phosphatase E1 from Yersinia pseudotuberculosis serotype IB (strain PB1/+).